The following is a 1229-amino-acid chain: MKSFGSVRSIFMHANSVDLVLMGLGLIGAVGDGFITPIIFFITGLLLNDIGDSSFGDKTFMHAIMKNAVALLYVAGASLVICFVEGYCWTRTGERQASRMREKYLRAVLRQDVGYFDLHVTSTSDVITSVSSDTLVIQDVLSEKLPNFLMSASAFVASYIVGFIMLWRLTIVGFPFFILLLIPGLMCGRALINISRKIREEYNEAGSIAEQAISLVRTVYAFGSERKMISKFSAALEGSVKLGLRQGIAKGIAIGSNGVTYAIWGFMTWYGSRMVMYHGAKGGTIFAVIICITYGGTSLGRGLSNLKYFSEAVVAGERIIEVIKRVPDIDSDNPRGQVLENIKGEVQFKHVKFMYSSRPETPIFDDLCLRIPSGKSVALVGGSGSGKSTVISLLQRFYDPIVGEILIDGVSIKKLQVKWLRSQMGLVSQEPALFATSIEENILFGKEDASFDEVVEAAKSSNAHDFISQFPLGYKTQVGERGVQMSGGQKQRISIARAIIKSPTLLLLDEATSALDSESERVVQEALDNATIGRTTIVIAHRLSTIRNVDVICVFKNGQIVETGSHEELMENVDGQYTSLVRLQIMENEESNDNVSVSMREGQFSNFNKDVKYSSRLSIQSRSSLFATSSIDTNLAGSIPKDKKPSFKRLMAMNKPEWKHALYGCLSAVLYGALHPIYAYASGSMVSVYFLTSHDEMKEKTRIYVLLFVGLAVLCFLISIIQQYSFAYMGEYLTKRIRENILSKLLTFEVSWFDEDENSSGSICSRLAKDANVVRSLVGERVSLLVQTISAVSVACTLGLAISWKLSIVMIAIQPVVVGCFYTQRIVLKSISKKAIKAQDESSKLAAEAVSNIRTITAFSSQERILKLLKMVQEGPQRENIRQSWLAGIVLATSRSLMTCTSALNYWYGARLIIDGKITSKAFFELFILFVSTGRVIADAGAMTMDLAKGSDAVGSVFAVLDRYTNIEPEKPDGFVPQNIKGQIKFVNVDFAYPTRPDVIIFKNFSIDIDEGKSTAIVGPSGSGKSTIIGLIERFYDPLKGIVKIDGRDIRSYHLRSLRQHIGLVSQEPILFAGTIRENIMYGGASDKIDESEIIEAAKAANAHDFIVTLSDGYDTYCGDRGVQLSGGQKQRIAIARAVLKNPSVLLLDEATSALDNQSERMVQDALGRLMVGRTSVVIAHRLSTIQNCDTITVLDKGKVVECGTHSSLLAKGPTGVYFSLVSLQRTRY.

A run of 6 helical transmembrane segments spans residues 22–42 (MGLG…IFFI), 69–89 (VALL…GYCW), 145–167 (LPNF…IMLW), 171–193 (IVGF…ALIN), 251–271 (GIAI…TWYG), and 274–294 (MVMY…CITY). The 290-residue stretch at 22–311 (MGLGLIGAVG…GLSNLKYFSE (290 aa)) folds into the ABC transmembrane type-1 1 domain. Residues 346-582 (VQFKHVKFMY…VDGQYTSLVR (237 aa)) enclose the ABC transporter 1 domain. 381-388 (GGSGSGKS) provides a ligand contact to ATP. 2 N-linked (GlcNAc...) asparagine glycosylation sites follow: asparagine 529 and asparagine 594. 2 helical membrane passes run 661 to 681 (ALYG…YAYA) and 703 to 723 (IYVL…IIQQ). The region spanning 661–949 (ALYGCLSAVL…AGAMTMDLAK (289 aa)) is the ABC transmembrane type-1 2 domain. Asparagine 758 carries an N-linked (GlcNAc...) asparagine glycan. 4 helical membrane-spanning segments follow: residues 782-800 (VSLL…TLGL), 807-823 (SIVM…CFYT), 885-908 (WLAG…NYWY), and 923-943 (FFEL…AGAM). Positions 984–1222 (IKFVNVDFAY…GPTGVYFSLV (239 aa)) constitute an ABC transporter 2 domain. Asparagine 1004 is a glycosylation site (N-linked (GlcNAc...) asparagine). 1019-1026 (GPSGSGKS) provides a ligand contact to ATP. The N-linked (GlcNAc...) asparagine glycan is linked to asparagine 1157.

This sequence belongs to the ABC transporter superfamily. ABCB family. Multidrug resistance exporter (TC 3.A.1.201) subfamily.

The protein localises to the membrane. This is ABC transporter B family member 22 (ABCB22) from Arabidopsis thaliana (Mouse-ear cress).